Consider the following 651-residue polypeptide: E3 SUMO-protein ligase PIAS1 (651 aa).

Residue Ala2 is modified to N-acetylalanine. The tract at residues 2 to 200 (ADSAELKQMV…KCDFTVQVQL (199 aa)) is required for interaction with MSX1. Positions 11 to 45 (VMSLRVSELQVLLGYAGRNKHGRKHELLTKALHLL) constitute an SAP domain. The LXXLL motif signature appears at 19–23 (LQVLL). Residues Lys40 and Lys46 each participate in a glycyl lysine isopeptide (Lys-Gly) (interchain with G-Cter in SUMO2) cross-link. Positions 56-64 (KIKELYRRR) match the Nuclear localization signal motif. Residues 124–288 (HLTSALHPVH…SMAVYLVKQL (165 aa)) enclose the PINIT domain. Glycyl lysine isopeptide (Lys-Gly) (interchain with G-Cter in SUMO2) cross-links involve residues Lys137 and Lys238. The SP-RING-type zinc-finger motif lies at 320–405 (PDSEIATTSL…LKYCTDCDEI (86 aa)). Zn(2+) contacts are provided by Cys351, His353, Cys374, and Cys377. The short motif at 368-380 (KKPTWVCPVCDKK) is the Nuclear localization signal element. Lys453 participates in a covalent cross-link: Glycyl lysine isopeptide (Lys-Gly) (interchain with G-Cter in SUMO2). The SUMO1-binding stretch occupies residues 462-473 (LTIDSSSDEEEE). Positions 465 to 511 (DSSSDEEEEEPSAKRTCPSLSPTSPLNNKGILSLPHQASPVSRTPSL) are disordered. A phosphoserine mark is found at Ser467, Ser468, Ser483, and Ser485. Over residues 482–491 (PSLSPTSPLN) the composition is skewed to polar residues. At Thr487 the chain carries Phosphothreonine. Ser488 bears the Phosphoserine mark. Lys493 is covalently cross-linked (Glycyl lysine isopeptide (Lys-Gly) (interchain with G-Cter in SUMO2)). A phosphoserine mark is found at Ser503, Ser510, and Ser522. Tandem repeats lie at residues 520–523 (NTSL) and 557–560 (NTSL). Positions 520–615 (NTSLIQDYRH…GSSSGSNSSL (96 aa)) are 4 X 4 AA repeats of N-T-S-L. The 3; approximate repeat unit spans residues 598 to 601 (STSL). Residues 599-621 (TSLPTTNGSSSGSNSSLVSSNSL) show a composition bias toward low complexity. Residues 599–632 (TSLPTTNGSSSGSNSSLVSSNSLRESHSHTVTNR) form a disordered region. One copy of the 4; approximate repeat lies at 612-615 (NSSL).

This sequence belongs to the PIAS family. Interacts with NCOA2 and AR. Interacts with NR2C1; the interaction promotes its sumoylation. Interacts with DDX21, CSRP2, AXIN1, JUN, UBE2I, SUMO1, SATB2, PLAG1, TP53 and STAT1 (dimer), following IFNA1-stimulation. Interacts with SP3 (preferentially when SUMO-modified). Interacts with KLF8; the interaction results in SUMO ligation and repression of KLF8 transcriptional activity and of its cell cycle progression into G(1) phase. Interacts with CHUK/IKKA; this interaction induces PIAS1 phosphorylation. Interacts with PTK2/FAK1; the interaction promotes its sumoylation. Interacts with DDX5. Interacts with PML. Interacts with MTA1. Interacts with SUMO1P1/SUMO5. Interacts with PRDM1/Blimp-1. Interacts (via N-terminus) with MSX1 (via C-terminus); the interaction is required for the localization of both proteins to the nuclear periphery and specific binding of MSX1 to the core enhancer region in target gene promoters. In terms of assembly, (Microbial infection) Interacts with ebolavirus VP35; this interaction mediates the sumoylation of IRF7 and contributes to the viral inhibition of IFN-type I production. In terms of processing, sumoylated. In terms of tissue distribution, expressed in numerous tissues with highest level in testis.

It localises to the nucleus. The protein resides in the nucleus speckle. Its subcellular location is the PML body. It is found in the cytoplasm. The protein localises to the cytoskeleton. The protein operates within protein modification; protein sumoylation. Functionally, functions as an E3-type small ubiquitin-like modifier (SUMO) ligase, stabilizing the interaction between UBE2I and the substrate, and as a SUMO-tethering factor. Catalyzes sumoylation of various proteins, such as CEBPB, MRE11, MTA1, PTK2 and PML. Plays a crucial role as a transcriptional coregulation in various cellular pathways, including the STAT pathway, the p53 pathway and the steroid hormone signaling pathway. In vitro, binds A/T-rich DNA. The effects of this transcriptional coregulation, transactivation or silencing, may vary depending upon the biological context. Mediates sumoylation of MRE11, stabilizing MRE11 on chromatin during end resection. Sumoylates PML (at 'Lys-65' and 'Lys-160') and PML-RAR and promotes their ubiquitin-mediated degradation. PIAS1-mediated sumoylation of PML promotes its interaction with CSNK2A1/CK2 which in turn promotes PML phosphorylation and degradation. Enhances the sumoylation of MTA1 and may participate in its paralog-selective sumoylation. Plays a dynamic role in adipogenesis by promoting the SUMOylation and degradation of CEBPB. Mediates the nuclear mobility and localization of MSX1 to the nuclear periphery, whereby MSX1 is brought into the proximity of target myoblast differentiation factor genes. Also required for the binding of MSX1 to the core enhancer region in target gene promoter regions, independent of its sumoylation activity. Capable of binding to the core enhancer region TAAT box in the MYOD1 gene promoter. Its function is as follows. (Microbial infection) Restricts Epstein-Barr virus (EBV) lytic replication by acting as an inhibitor for transcription factors involved in lytic gene expression. The virus can use apoptotic caspases to antagonize PIAS1-mediated restriction and express its lytic genes. In Homo sapiens (Human), this protein is E3 SUMO-protein ligase PIAS1 (PIAS1).